The chain runs to 108 residues: Succinate dehydrogenase assembly factor 4, mitochondrial (108 aa).

Positions 33 to 46 (NNNNNNNNNNNNNN) are enriched in low complexity. Disordered stretches follow at residues 33–59 (NNNN…KENQ) and 79–108 (NPIT…VSDF). Over residues 95-108 (RYNDWERNGRVSDF) the composition is skewed to basic and acidic residues.

It belongs to the SDHAF4 family. As to quaternary structure, interacts with SdhA in its FAD-bound form.

The protein resides in the mitochondrion matrix. Functionally, plays an essential role in the assembly of succinate dehydrogenase (SDH), an enzyme complex (also referred to as respiratory complex II) that is a component of both the tricarboxylic acid (TCA) cycle and the mitochondrial electron transport chain, and which couples the oxidation of succinate to fumarate with the reduction of ubiquinone (coenzyme Q) to ubiquinol. Binds to the flavoprotein subunit SdhA in its FAD-bound form, blocking the generation of excess reactive oxygen species (ROS) and facilitating its assembly with the iron-sulfur protein subunit SdhB into the SDH catalytic dimer. The polypeptide is Succinate dehydrogenase assembly factor 4, mitochondrial (Dictyostelium discoideum (Social amoeba)).